Here is a 1231-residue protein sequence, read N- to C-terminus: Cohesin subunit SA-2 (1231 aa).

Residue M1 is modified to N-acetylmethionine. Residues 1-75 (MIAAPEIPTD…GPNRMNGHHQ (75 aa)) are disordered. Positions 36–48 (KQGKGKTCKKGKK) are enriched in basic residues. The region spanning 293 to 378 (FVHRYRDAIA…SRFKDRIVSM (86 aa)) is the SCD domain. K607 carries the N6-acetyllysine modification. Phosphoserine is present on residues S1058, S1061, S1064, and S1065. Positions 1064-1083 (SSRGSTVRSKKSKPSTGKRK) are disordered. The span at 1071–1082 (RSKKSKPSTGKR) shows a compositional bias: basic residues. Position 1112 is a phosphothreonine (T1112). S1177 and S1178 each carry phosphoserine.

It belongs to the SCC3 family. Interacts directly with RAD21 in cohesin complex. Cohesin complexes are composed of a heterodimer between a SMC1 protein (SMC1A or SMC1B) and SMC3, which are attached via their hinge domain, and RAD21 which link them at their heads, and one STAG protein (STAG1, STAG2 or STAG3). In cohesin complexes, STAG2 is mutually exclusive with STAG1 and STAG3. Phosphorylated by PLK1. The large dissociation of cohesin from chromosome arms during prophase is partly due to its phosphorylation.

It localises to the nucleus. The protein resides in the chromosome. It is found in the centromere. In terms of biological role, component of cohesin complex, a complex required for the cohesion of sister chromatids after DNA replication. The cohesin complex apparently forms a large proteinaceous ring within which sister chromatids can be trapped. At anaphase, the complex is cleaved and dissociates from chromatin, allowing sister chromatids to segregate. The cohesin complex may also play a role in spindle pole assembly during mitosis. The polypeptide is Cohesin subunit SA-2 (STAG2) (Homo sapiens (Human)).